We begin with the raw amino-acid sequence, 502 residues long: Cytochrome P450 2J3 (502 aa).

Cysteine 448 is a binding site for heme.

The protein belongs to the cytochrome P450 family. Requires heme as cofactor. In terms of tissue distribution, abundantly expressed in heart and liver.

Its subcellular location is the endoplasmic reticulum membrane. The protein localises to the microsome membrane. The enzyme catalyses an organic molecule + reduced [NADPH--hemoprotein reductase] + O2 = an alcohol + oxidized [NADPH--hemoprotein reductase] + H2O + H(+). Its function is as follows. This enzyme metabolizes arachidonic acid predominantly via a NADPH-dependent olefin epoxidation mainly to 14,15-, 11,12-, and 8,9-epoxyeicosatrienoic acids (EET). It also acts as an omega-1-hydroxylase by metabolizing arachidonic acid to 19-hydroxyeicosatetraenoic acid (19-OH-AA). This is Cytochrome P450 2J3 (Cyp2j3) from Rattus norvegicus (Rat).